Here is an 860-residue protein sequence, read N- to C-terminus: DNA gyrase subunit A (860 aa).

Residues 34–503 enclose the Topo IIA-type catalytic domain; the sequence is LPDARDGLKP…EDGELIDTDL (470 aa). Tyr-122 functions as the O-(5'-phospho-DNA)-tyrosine intermediate in the catalytic mechanism. Positions 530 to 536 match the GyrA-box motif; the sequence is QNRATRG.

It belongs to the type II topoisomerase GyrA/ParC subunit family. In terms of assembly, heterotetramer, composed of two GyrA and two GyrB chains. In the heterotetramer, GyrA contains the active site tyrosine that forms a transient covalent intermediate with DNA, while GyrB binds cofactors and catalyzes ATP hydrolysis.

The protein resides in the cytoplasm. It catalyses the reaction ATP-dependent breakage, passage and rejoining of double-stranded DNA.. In terms of biological role, a type II topoisomerase that negatively supercoils closed circular double-stranded (ds) DNA in an ATP-dependent manner to modulate DNA topology and maintain chromosomes in an underwound state. Negative supercoiling favors strand separation, and DNA replication, transcription, recombination and repair, all of which involve strand separation. Also able to catalyze the interconversion of other topological isomers of dsDNA rings, including catenanes and knotted rings. Type II topoisomerases break and join 2 DNA strands simultaneously in an ATP-dependent manner. The sequence is that of DNA gyrase subunit A from Synechocystis sp. (strain ATCC 27184 / PCC 6803 / Kazusa).